We begin with the raw amino-acid sequence, 201 residues long: Ras-related protein Rab-1B (201 aa).

At Met-1 the chain carries N-acetylmethionine. Positions 17, 18, 19, 20, 21, 22, 23, 33, 34, 35, 36, 39, and 40 each coordinate GTP. Ser-22 serves as a coordination point for Mg(2+). Residues 30–45 (DDTYTESYISTIGVDF) carry the Switch 1 motif. 2 residues coordinate Mg(2+): Thr-40 and Asp-63. A switch 2 region; required for interaction with REP1/CHM region spans residues 64 to 83 (TAGQERFRTITSSYYRGAHG). A Switch 2 motif is present at residues 65-80 (AGQERFRTITSSYYRG). GTP is bound by residues Gly-66, Asn-121, Lys-122, Asp-124, Ser-151, Ala-152, and Lys-153. The interval 174–201 (GPGAASGGERPNLKIDSTPVKPASGGCC) is disordered. Residues Cys-200 and Cys-201 are each lipidated (S-geranylgeranyl cysteine). Cys-201 is subject to Cysteine methyl ester.

It belongs to the small GTPase superfamily. Rab family. As to quaternary structure, interacts with MICAL1 and MICAL2. Interacts (GTP-bound form) with MICALCL, MICAL1 and MILCAL3. Interacts with GDI1; the interaction requires the GDP-bound state. Interacts with CHM/REP1; the interaction requires the GDP-bound form and is necessary for prenylation by GGTase II. Interacts with RabGAP TBC1D20. Interacts (in GDP-bound form) with lipid phosphatase MTMR6 (via GRAM domain); the interaction regulates MTMR6 recruitment to the endoplasmic reticulum-Golgi intermediate compartment. Interacts (in GDP-bound form) with lipid phosphatase MTMR7. Mg(2+) is required as a cofactor. In terms of processing, prenylated; by GGTase II, only after interaction of the substrate with Rab escort protein 1 (REP1).

The protein localises to the cytoplasm. Its subcellular location is the membrane. It is found in the preautophagosomal structure membrane. It localises to the perinuclear region. The catalysed reaction is GTP + H2O = GDP + phosphate + H(+). Regulated by guanine nucleotide exchange factors (GEFs) which promote the exchange of bound GDP for free GTP. Regulated by GTPase activating proteins (GAPs) including TBC1D20 which increases the GTP hydrolysis activity. Inhibited by GDP dissociation inhibitors (GDIs). Its function is as follows. The small GTPases Rab are key regulators of intracellular membrane trafficking, from the formation of transport vesicles to their fusion with membranes. Rabs cycle between an inactive GDP-bound form and an active GTP-bound form that is able to recruit to membranes different set of downstream effectors directly responsible for vesicle formation, movement, tethering and fusion. Plays a role in the initial events of the autophagic vacuole development which take place at specialized regions of the endoplasmic reticulum. Regulates vesicular transport between the endoplasmic reticulum and successive Golgi compartments. Required to modulate the compacted morphology of the Golgi. Promotes the recruitment of lipid phosphatase MTMR6 to the endoplasmic reticulum-Golgi intermediate compartment. This chain is Ras-related protein Rab-1B (Rab1b), found in Mus musculus (Mouse).